The following is a 505-amino-acid chain: MLDLTYETPKPKVIAGAREDWELVIGLEVHAQVATNAKLFSGASTLFGAEPNSNVAFVDAGMPGMLPVINEECVAQAVRTGLGLKAAINLTSAFDRKNYFYPDLPQGYQISQLYHPIVGEGEVLVELGDGTARVVRIERIHLEQDAGKSIHDMDPHMSFVDLNRTGVALMEIVSRPDIRGPEEAAAYVSKLRQIMRYLGTCDGNMQNGNLRADVNVSVCRPGDYEKYQASQDFSHLGTRCEIKNMNSLRFIQQAIEYEARRQIAIIEDGGSVTQETRLYDPDKGETRSMRSKEEAHDYRYFPDPDLLPLEIEQAWVDDIAAALPELPDAKKARFITEFGLSDYDASVLTADTTNAAYFEAVAGEAGDGKLAANWVINELFGRLKKEDHDITESPVSPAQLAGIIKLIKADAISGKIAKDLFEIVYTEGGDPAEIVEARGMKQVTDTGAIEAAVDEIIAANPAQVAKAQENPKLAGWFVGQVMKATGGKANPKAVNQIVAAKLAQQ.

It belongs to the GatB/GatE family. GatB subfamily. As to quaternary structure, heterotrimer of A, B and C subunits.

It catalyses the reaction L-glutamyl-tRNA(Gln) + L-glutamine + ATP + H2O = L-glutaminyl-tRNA(Gln) + L-glutamate + ADP + phosphate + H(+). The enzyme catalyses L-aspartyl-tRNA(Asn) + L-glutamine + ATP + H2O = L-asparaginyl-tRNA(Asn) + L-glutamate + ADP + phosphate + 2 H(+). Allows the formation of correctly charged Asn-tRNA(Asn) or Gln-tRNA(Gln) through the transamidation of misacylated Asp-tRNA(Asn) or Glu-tRNA(Gln) in organisms which lack either or both of asparaginyl-tRNA or glutaminyl-tRNA synthetases. The reaction takes place in the presence of glutamine and ATP through an activated phospho-Asp-tRNA(Asn) or phospho-Glu-tRNA(Gln). The chain is Aspartyl/glutamyl-tRNA(Asn/Gln) amidotransferase subunit B from Dinoroseobacter shibae (strain DSM 16493 / NCIMB 14021 / DFL 12).